The sequence spans 110 residues: U9-agatoxin-Ao1a (110 aa).

The first 17 residues, 1–17 (MKLLLAIAGLFLVQTLA), serve as a signal peptide directing secretion. A propeptide spanning residues 18–38 (EDVRAHEESSFLAAVAPEEQR) is cleaved from the precursor. Disulfide bonds link Cys40-Cys54, Cys47-Cys60, Cys51-Cys87, Cys53-Cys72, and Cys62-Cys70.

This sequence belongs to the neurotoxin 37 family. In terms of tissue distribution, expressed by the venom gland.

It localises to the secreted. The protein is U9-agatoxin-Ao1a of Agelena orientalis (Funnel-web spider).